Reading from the N-terminus, the 746-residue chain is Actin filament-associated protein 1-like 1 (746 aa).

Positions 88–206 (EDQKKEPEAN…RLTHQWPSEE (119 aa)) are disordered. Polar residues predominate over residues 98 to 107 (HTVTKPSKTD). Positions 108-119 (SPPPLPNTPPPE) are enriched in pro residues. A compositionally biased stretch (low complexity) spans 139–148 (SRSSSSPPNS). Positions 214–310 (DCHICAFLLR…WLHVVRDVTG (97 aa)) constitute a PH 1 domain. A disordered region spans residues 336-371 (EKQTSDSDSMPSGESARDIRENGKPKRGALSELTGT). Residues 350 to 359 (SARDIRENGK) are compositionally biased toward basic and acidic residues. The PH 2 domain occupies 406–497 (RCGYVGVLVN…WLGVLLAETG (92 aa)). Disordered stretches follow at residues 539-596 (EVPF…TRAQ) and 723-746 (PSIY…KKGT). The span at 562-575 (SFSSSDTGKPSPQI) shows a compositional bias: polar residues. Residues 591 to 682 (GKTRAQEDAR…VKENLKKSLA (92 aa)) adopt a coiled-coil conformation. Residues 736–746 (KAKEWESKKGT) are compositionally biased toward basic and acidic residues.

It is found in the cytoplasm. Its subcellular location is the cell projection. The protein localises to the podosome. The protein resides in the invadopodium. It localises to the cytoskeleton. It is found in the stress fiber. Its function is as follows. May be involved in podosome and invadosome formation. The polypeptide is Actin filament-associated protein 1-like 1 (afap1l1) (Danio rerio (Zebrafish)).